A 508-amino-acid chain; its full sequence is Glycerol kinase (508 aa).

Threonine 15 contributes to the ADP binding site. ATP contacts are provided by threonine 15, serine 16, and serine 17. Threonine 15 contacts sn-glycerol 3-phosphate. Arginine 19 contributes to the ADP binding site. Residues arginine 85, glutamate 86, tyrosine 138, and aspartate 251 each coordinate sn-glycerol 3-phosphate. Positions 85, 86, 138, 251, and 252 each coordinate glycerol. ADP is bound by residues threonine 273, glycine 317, and glycine 419. Residues threonine 273, glycine 317, and glycine 419 each coordinate ATP.

It belongs to the FGGY kinase family.

It carries out the reaction glycerol + ATP = sn-glycerol 3-phosphate + ADP + H(+). It participates in polyol metabolism; glycerol degradation via glycerol kinase pathway; sn-glycerol 3-phosphate from glycerol: step 1/1. Its activity is regulated as follows. Inhibited by fructose 1,6-bisphosphate (FBP). Functionally, key enzyme in the regulation of glycerol uptake and metabolism. Catalyzes the phosphorylation of glycerol to yield sn-glycerol 3-phosphate. In Mycoplasma pneumoniae (strain ATCC 29342 / M129 / Subtype 1) (Mycoplasmoides pneumoniae), this protein is Glycerol kinase.